The primary structure comprises 565 residues: MELEYESKRPLYIPHAGPILLEFPLLNKGSAFSLEERDNFNLQGLLPDTVETIEEQAERAWRQYQDFRTNIDRHIYLRNIQDTNETLFYRLLAAHLAEMLPIIYTPTVGDACERFSDIYRRARGVFISYNNCDKIEDMLQNATKQNVKVIVVTDGERILGLGDQGIGGMGIPIGKLSLYTACGGISPAYTLPVVLDAGTNNQQLLNDPLYMGWRHPRITGEQYDKFVDAFIQAVKRRWPNVLLQFEDFAQKNATPLLNRYRSELCCFNDDIQGTAAVTLGCLLAASRAAGKRLRDQKVVFLGAGSAGCGIAEQITAEMRTEGLSEDEARRRVLMVDRFGLLTDKLANLLDFQSRLVQPSDSLSDWQLDSDTISLQDVVRNARPTVLIGVSGQPGLFTEEIIRDMHQHCERPIVMPLSNPTSRVEATPEDLLRWTDGAALVATGSPFAPVQFEGKTYPIAQCNNAYIFPGIGLGVLASGAGQITDAMLIAASRALADCSPLANGDGGALLPDINDIQSVSRVIAMAVAKAAQVHGVALVTSEETLSLAIEHNFWQPQYRDYRRTSF.

The active-site Proton donor is Y104. R157 is an NAD(+) binding site. Catalysis depends on K175, which acts as the Proton acceptor. Residues E246, D247, and D270 each coordinate a divalent metal cation. NAD(+)-binding residues include D270 and N418.

It belongs to the malic enzymes family. As to quaternary structure, homotetramer. Mg(2+) serves as cofactor. It depends on Mn(2+) as a cofactor.

It catalyses the reaction (S)-malate + NAD(+) = pyruvate + CO2 + NADH. The enzyme catalyses oxaloacetate + H(+) = pyruvate + CO2. This Sodalis glossinidius (strain morsitans) protein is NAD-dependent malic enzyme.